A 322-amino-acid chain; its full sequence is 1-aminocyclopropane-1-carboxylate oxidase 1 (322 aa).

The Fe2OG dioxygenase domain maps to 159–259 (PTFGTKVSSY…RMSIASFYNP (101 aa)). The Fe cation site is built by His-183, Asp-185, and His-240.

Belongs to the iron/ascorbate-dependent oxidoreductase family. It depends on Fe cation as a cofactor.

The enzyme catalyses 1-aminocyclopropane-1-carboxylate + L-ascorbate + O2 = ethene + L-dehydroascorbate + hydrogen cyanide + CO2 + 2 H2O. It participates in alkene biosynthesis; ethylene biosynthesis via S-adenosyl-L-methionine; ethylene from S-adenosyl-L-methionine: step 2/2. The polypeptide is 1-aminocyclopropane-1-carboxylate oxidase 1 (ACO1) (Oryza sativa subsp. japonica (Rice)).